Consider the following 116-residue polypeptide: Large ribosomal subunit protein uL18 (116 aa).

Belongs to the universal ribosomal protein uL18 family. Part of the 50S ribosomal subunit; part of the 5S rRNA/L5/L18/L25 subcomplex. Contacts the 5S and 23S rRNAs.

Functionally, this is one of the proteins that bind and probably mediate the attachment of the 5S RNA into the large ribosomal subunit, where it forms part of the central protuberance. In Chromohalobacter salexigens (strain ATCC BAA-138 / DSM 3043 / CIP 106854 / NCIMB 13768 / 1H11), this protein is Large ribosomal subunit protein uL18.